We begin with the raw amino-acid sequence, 437 residues long: MANMRNIILTALLSAIALVSGYVEGLDDKFTEFRQNELWLVEFYAPWCAYCHTFEPVWTEVGAELKSLGSPVNVGKIDTTAHTSIATEFNIRGYPTIKLFKGDLSFDYKGPRTKDGIIEFTNRVSGPVVRPLSSVQLFQHVMSRHDVIFVYIGGESLLKKEYYKAATEFIVHTYFFTASEEILPKAVTLQDVPAVAVFKDGTYYIYNEFIDGDLSSWINRERFLSYFQIDSYSLYQMGELSKLVALAVVDEKNPSEESIRYKTLMERVSTEYRDHYKSDFQFGYVDGNEYVNGLIMGELAMPSIIVLNMSIDGYYIPESSTETIEDLLQFLNSVLDGSTTLLGGNGFWQCAKRIFYKGKNTVMSMVETAPVFSCFVLGLPVGVVVLVIYATCTAVPADDEKPEEEATASPALDTHGKKAIESQPESTEKTSEAKKED.

An N-terminal signal peptide occupies residues 1-21 (MANMRNIILTALLSAIALVSG). The region spanning 22-126 (YVEGLDDKFT…IIEFTNRVSG (105 aa)) is the Thioredoxin domain. The Extracellular segment spans residues 22-368 (YVEGLDDKFT…KNTVMSMVET (347 aa)). Catalysis depends on nucleophile residues Cys48 and Cys51. A disulfide bond links Cys48 and Cys51. The N-linked (GlcNAc...) asparagine glycan is linked to Asn308. A helical membrane pass occupies residues 369–389 (APVFSCFVLGLPVGVVVLVIY). Over 390–437 (ATCTAVPADDEKPEEEATASPALDTHGKKAIESQPESTEKTSEAKKED) the chain is Cytoplasmic. Positions 398-437 (DDEKPEEEATASPALDTHGKKAIESQPESTEKTSEAKKED) are disordered. Residues 414 to 437 (THGKKAIESQPESTEKTSEAKKED) show a composition bias toward basic and acidic residues. A Di-lysine motif motif is present at residues 434–437 (KKED).

The protein resides in the endoplasmic reticulum membrane. The enzyme catalyses Catalyzes the rearrangement of -S-S- bonds in proteins.. In terms of biological role, probable disulfide isomerase, which participates in the folding of proteins containing disulfide bonds. May act as a dithiol oxidase. Acts as a regulator of endoplasmic reticulum-mitochondria contact sites via its ability to regulate redox signals. The protein is Protein disulfide-isomerase tmx3a (tmx3a) of Danio rerio (Zebrafish).